A 417-amino-acid polypeptide reads, in one-letter code: NADH-quinone oxidoreductase subunit D (417 aa).

Belongs to the complex I 49 kDa subunit family. In terms of assembly, NDH-1 is composed of 14 different subunits. Subunits NuoB, C, D, E, F, and G constitute the peripheral sector of the complex.

It is found in the cell inner membrane. It catalyses the reaction a quinone + NADH + 5 H(+)(in) = a quinol + NAD(+) + 4 H(+)(out). In terms of biological role, NDH-1 shuttles electrons from NADH, via FMN and iron-sulfur (Fe-S) centers, to quinones in the respiratory chain. The immediate electron acceptor for the enzyme in this species is believed to be ubiquinone. Couples the redox reaction to proton translocation (for every two electrons transferred, four hydrogen ions are translocated across the cytoplasmic membrane), and thus conserves the redox energy in a proton gradient. This Paraburkholderia phymatum (strain DSM 17167 / CIP 108236 / LMG 21445 / STM815) (Burkholderia phymatum) protein is NADH-quinone oxidoreductase subunit D.